The following is a 267-amino-acid chain: NAD kinase 2 (267 aa).

Aspartate 52 (proton acceptor) is an active-site residue. NAD(+)-binding positions include 52 to 53 (DA), 124 to 125 (NE), arginine 151, aspartate 153, 164 to 169 (TAYNKS), and alanine 188.

The protein belongs to the NAD kinase family. Requires a divalent metal cation as cofactor.

It is found in the cytoplasm. It catalyses the reaction NAD(+) + ATP = ADP + NADP(+) + H(+). In terms of biological role, involved in the regulation of the intracellular balance of NAD and NADP, and is a key enzyme in the biosynthesis of NADP. Catalyzes specifically the phosphorylation on 2'-hydroxyl of the adenosine moiety of NAD to yield NADP. This Bacillus anthracis protein is NAD kinase 2.